Reading from the N-terminus, the 305-residue chain is uncharacterized protein (305 aa).

3 consecutive transmembrane segments (helical) span residues 52-72 (TINL…SKII), 89-109 (IAGF…FIAA), and 120-140 (VIAI…GSLS).

Belongs to the MscS (TC 1.A.23) family.

It localises to the cell membrane. This is an uncharacterized protein from Buchnera aphidicola subsp. Acyrthosiphon pisum (strain APS) (Acyrthosiphon pisum symbiotic bacterium).